The sequence spans 641 residues: Chaperone protein DnaK (641 aa).

Thr-200 bears the Phosphothreonine; by autocatalysis mark. Positions 606-623 are enriched in low complexity; that stretch reads AEQGGNADAASGNAQASK. A disordered region spans residues 606–628; the sequence is AEQGGNADAASGNAQASKAADDV.

This sequence belongs to the heat shock protein 70 family.

In terms of biological role, acts as a chaperone. The sequence is that of Chaperone protein DnaK from Xanthomonas axonopodis pv. citri (strain 306).